Consider the following 441-residue polypeptide: Ribulose bisphosphate carboxylase large chain (441 aa).

Lys-5 carries the N6,N6,N6-trimethyllysine modification. 2 residues coordinate substrate: Asn-114 and Thr-164. The active-site Proton acceptor is the Lys-166. Lys-168 contacts substrate. The Mg(2+) site is built by Lys-192, Asp-194, and Glu-195. An N6-carboxylysine modification is found at Lys-192. The Proton acceptor role is filled by His-285. Arg-286, His-318, and Ser-370 together coordinate substrate.

This sequence belongs to the RuBisCO large chain family. Type I subfamily. In terms of assembly, heterohexadecamer of 8 large chains and 8 small chains; disulfide-linked. The disulfide link is formed within the large subunit homodimers. It depends on Mg(2+) as a cofactor. Post-translationally, the disulfide bond which can form in the large chain dimeric partners within the hexadecamer appears to be associated with oxidative stress and protein turnover.

The protein localises to the plastid. Its subcellular location is the chloroplast. It carries out the reaction 2 (2R)-3-phosphoglycerate + 2 H(+) = D-ribulose 1,5-bisphosphate + CO2 + H2O. It catalyses the reaction D-ribulose 1,5-bisphosphate + O2 = 2-phosphoglycolate + (2R)-3-phosphoglycerate + 2 H(+). In terms of biological role, ruBisCO catalyzes two reactions: the carboxylation of D-ribulose 1,5-bisphosphate, the primary event in carbon dioxide fixation, as well as the oxidative fragmentation of the pentose substrate in the photorespiration process. Both reactions occur simultaneously and in competition at the same active site. This is Ribulose bisphosphate carboxylase large chain from Begonia metallica x Begonia sanguinea.